The chain runs to 180 residues: Acireductone dioxygenase (180 aa).

Fe(2+)-binding residues include histidine 97, histidine 99, glutamate 103, and histidine 141. Ni(2+) contacts are provided by histidine 97, histidine 99, glutamate 103, and histidine 141.

Belongs to the acireductone dioxygenase (ARD) family. As to quaternary structure, monomer. It depends on Fe(2+) as a cofactor. Ni(2+) is required as a cofactor.

The enzyme catalyses 1,2-dihydroxy-5-(methylsulfanyl)pent-1-en-3-one + O2 = 3-(methylsulfanyl)propanoate + CO + formate + 2 H(+). The catalysed reaction is 1,2-dihydroxy-5-(methylsulfanyl)pent-1-en-3-one + O2 = 4-methylsulfanyl-2-oxobutanoate + formate + 2 H(+). The protein operates within amino-acid biosynthesis; L-methionine biosynthesis via salvage pathway; L-methionine from S-methyl-5-thio-alpha-D-ribose 1-phosphate: step 5/6. Catalyzes 2 different reactions between oxygen and the acireductone 1,2-dihydroxy-3-keto-5-methylthiopentene (DHK-MTPene) depending upon the metal bound in the active site. Fe-containing acireductone dioxygenase (Fe-ARD) produces formate and 2-keto-4-methylthiobutyrate (KMTB), the alpha-ketoacid precursor of methionine in the methionine recycle pathway. Ni-containing acireductone dioxygenase (Ni-ARD) produces methylthiopropionate, carbon monoxide and formate, and does not lie on the methionine recycle pathway. The protein is Acireductone dioxygenase of Cronobacter sakazakii (strain ATCC BAA-894) (Enterobacter sakazakii).